The sequence spans 220 residues: Homeobox-leucine zipper protein ATHB-21 (220 aa).

Residues 26–48 (VPQQGGEAKPTRRRKRKSKSVVV) form a disordered region. Residues 58 to 117 (GWFRKRKLSDEQVRMLEISFEDDHKLESERKDRLASELGLDPRQVAVWFQNRRARWKNKR) constitute a DNA-binding region (homeobox). The tract at residues 118-146 (VEDEYTKLKNAYETTVVEKCRLDSEVIHL) is leucine-zipper.

This sequence belongs to the HD-ZIP homeobox family. Class I subfamily. In terms of tissue distribution, widely expressed.

The protein resides in the nucleus. In terms of biological role, probable transcription factor. This is Homeobox-leucine zipper protein ATHB-21 (ATHB-21) from Arabidopsis thaliana (Mouse-ear cress).